The chain runs to 378 residues: Phosphoserine aminotransferase (378 aa).

Arg53 is an L-glutamate binding site. Pyridoxal 5'-phosphate contacts are provided by Trp117, Thr167, Asp190, and Gln213. The residue at position 214 (Lys214) is an N6-(pyridoxal phosphate)lysine. 255-256 (NT) lines the pyridoxal 5'-phosphate pocket.

It belongs to the class-V pyridoxal-phosphate-dependent aminotransferase family. SerC subfamily. Homodimer. The cofactor is pyridoxal 5'-phosphate.

Its subcellular location is the cytoplasm. The catalysed reaction is O-phospho-L-serine + 2-oxoglutarate = 3-phosphooxypyruvate + L-glutamate. It carries out the reaction 4-(phosphooxy)-L-threonine + 2-oxoglutarate = (R)-3-hydroxy-2-oxo-4-phosphooxybutanoate + L-glutamate. Its pathway is amino-acid biosynthesis; L-serine biosynthesis; L-serine from 3-phospho-D-glycerate: step 2/3. The protein operates within cofactor biosynthesis; pyridoxine 5'-phosphate biosynthesis; pyridoxine 5'-phosphate from D-erythrose 4-phosphate: step 3/5. Catalyzes the reversible conversion of 3-phosphohydroxypyruvate to phosphoserine and of 3-hydroxy-2-oxo-4-phosphonooxybutanoate to phosphohydroxythreonine. The polypeptide is Phosphoserine aminotransferase (Ralstonia nicotianae (strain ATCC BAA-1114 / GMI1000) (Ralstonia solanacearum)).